The chain runs to 207 residues: Inner membrane-spanning protein YciB (207 aa).

A run of 6 helical transmembrane segments spans residues 3–23 (FLFD…AEGQ), 51–71 (VLLA…WLLL), 78–98 (TMLW…VWFH), 105–125 (WKPS…HAVF), 150–170 (FMWI…AYSF), and 178–198 (FKLF…GLYL).

This sequence belongs to the YciB family.

It is found in the cell inner membrane. Functionally, plays a role in cell envelope biogenesis, maintenance of cell envelope integrity and membrane homeostasis. In Methylibium petroleiphilum (strain ATCC BAA-1232 / LMG 22953 / PM1), this protein is Inner membrane-spanning protein YciB.